The sequence spans 30 residues: Thylakoid lumenal 17 kDa protein (30 aa).

Its subcellular location is the plastid. The protein localises to the chloroplast thylakoid lumen. The protein is Thylakoid lumenal 17 kDa protein of Spinacia oleracea (Spinach).